The primary structure comprises 352 residues: UDP-3-O-acylglucosamine N-acyltransferase (352 aa).

Histidine 246 functions as the Proton acceptor in the catalytic mechanism.

It belongs to the transferase hexapeptide repeat family. LpxD subfamily. Homotrimer.

The enzyme catalyses a UDP-3-O-[(3R)-3-hydroxyacyl]-alpha-D-glucosamine + a (3R)-hydroxyacyl-[ACP] = a UDP-2-N,3-O-bis[(3R)-3-hydroxyacyl]-alpha-D-glucosamine + holo-[ACP] + H(+). The protein operates within bacterial outer membrane biogenesis; LPS lipid A biosynthesis. Its function is as follows. Catalyzes the N-acylation of UDP-3-O-acylglucosamine using 3-hydroxyacyl-ACP as the acyl donor. Is involved in the biosynthesis of lipid A, a phosphorylated glycolipid that anchors the lipopolysaccharide to the outer membrane of the cell. The sequence is that of UDP-3-O-acylglucosamine N-acyltransferase from Chlorobium luteolum (strain DSM 273 / BCRC 81028 / 2530) (Pelodictyon luteolum).